We begin with the raw amino-acid sequence, 236 residues long: Ribonuclease HII (236 aa).

The 194-residue stretch at 21-214 (RTVAGVDEVG…LDALPRWQHL (194 aa)) folds into the RNase H type-2 domain. Aspartate 27, glutamate 28, and aspartate 119 together coordinate a divalent metal cation.

This sequence belongs to the RNase HII family. It depends on Mn(2+) as a cofactor. Requires Mg(2+) as cofactor.

It is found in the cytoplasm. The enzyme catalyses Endonucleolytic cleavage to 5'-phosphomonoester.. Functionally, endonuclease that specifically degrades the RNA of RNA-DNA hybrids. This Streptomyces griseus subsp. griseus (strain JCM 4626 / CBS 651.72 / NBRC 13350 / KCC S-0626 / ISP 5235) protein is Ribonuclease HII.